Reading from the N-terminus, the 94-residue chain is Integration host factor subunit beta (94 aa).

Belongs to the bacterial histone-like protein family. Heterodimer of an alpha and a beta chain.

Its function is as follows. This protein is one of the two subunits of integration host factor, a specific DNA-binding protein that functions in genetic recombination as well as in transcriptional and translational control. This Nitrosospira multiformis (strain ATCC 25196 / NCIMB 11849 / C 71) protein is Integration host factor subunit beta.